Consider the following 424-residue polypeptide: Glutamyl-tRNA reductase (424 aa).

Substrate contacts are provided by residues 49–52, Ser108, 113–115, and Gln119; these read TCNR and EPQ. The Nucleophile role is filled by Cys50. 188–193 provides a ligand contact to NADP(+); it reads GAGETI.

It belongs to the glutamyl-tRNA reductase family. In terms of assembly, homodimer.

The catalysed reaction is (S)-4-amino-5-oxopentanoate + tRNA(Glu) + NADP(+) = L-glutamyl-tRNA(Glu) + NADPH + H(+). It functions in the pathway porphyrin-containing compound metabolism; protoporphyrin-IX biosynthesis; 5-aminolevulinate from L-glutamyl-tRNA(Glu): step 1/2. Functionally, catalyzes the NADPH-dependent reduction of glutamyl-tRNA(Glu) to glutamate 1-semialdehyde (GSA). The chain is Glutamyl-tRNA reductase from Hahella chejuensis (strain KCTC 2396).